The following is a 928-amino-acid chain: MNEAMATDSPRRPSRCTGGVVVRPQAVTEQSYMESVVTFLQDVVPQAYSGTPLTEEKEKIVWVRFENADLNDTSRNLEFHEIHSTGNEPPLLIMIGYSDGMQVWSIPISGEAQELFSVRHGPIRAARILPAPQFGAQKCDNFAEKRPLLGVCKSIGSSGTSPPYCCVDLYSLRTGEMVKSIQFKTPIYDLHCNKRILVVVLQEKIAAFDSCTFTKKFFVTSCYPCPGPNMNPIALGSRWLAYAENKLIRCHQSRGGACGDNIQSYTATVISAAKTLKSGLTMVGKVVTQLTGTLPSGVTEDDVAIHSNSRRSPLVPGIITVIDTETVGEGQVLVSEDSDSDGIVAHFPAHEKPVCCMAFNTSGMLLVTTDTLGHDFHVFQILTHPWSSSQCAVHHLYTLHRGETEAKVQDICFSHDCRWVVVSTLRGTSHVFPINPYGGQPCVRTHMSPRVVNRMSRFQKSAGLEEIEQELTSKQGGRCSPVPGLSSSPSGSPLHGKLNSQDSYNNFTNNNPGNPRLSPLPSLMVVMPLAQIKQPMTLGTITKRTGPYLFGAGCFSIKAPCKVKPPPQISPSKSMGGEFCVAAIFGTSRSWFANNAGLKREKDQSKQVVVESLYIISCYGTLVEHMMEPRPLSTAPKISDDTPLEMMTSPRASWTLVRTPQWNELQPPFNANHPLLLAADAVQYYQFLLAGLVPPGSPGPITRHGSYDSLASDHSGQEDEEWLSQVEIVTHTGPHRRLWMGPQFQFKTIHPSGQTTVISSSSSVLQSHGPSDTPQPLLDFDTDDLDLNSLRIQPVRSDPVSMPGSSRPVSDRRGVSTVIDAASGTFDRSVTLLEVCGSWPEGFGLRHMSSMEHTEEGLRERLADAMAESPSRDVVGSGTELQREGSIETLSNSSGSTSGSIPRNFDGYRSPLPTNESQPLSLFPTGFP.

Met1 bears the N-acetylmethionine mark. One copy of the WD repeat lies at 69-114; sequence DLNDTSRNLEFHEIHSTGNEPPLLIMIGYSDGMQVWSIPISGEAQE. Lys215 is covalently cross-linked (Glycyl lysine isopeptide (Lys-Gly) (interchain with G-Cter in SUMO1); alternate). Lys215 is covalently cross-linked (Glycyl lysine isopeptide (Lys-Gly) (interchain with G-Cter in SUMO2); alternate). Required for recruitment to preautophagosomal structure in response to mitophagy stretches follow at residues 254–312 and 437–560; these read RGGA…SRRS and YGGQ…IKAP. Phosphoserine is present on residues Ser461, Ser480, and Ser488. 2 disordered regions span residues 472–515 and 755–777; these read TSKQ…PGNP and TTVI…PQPL. Composition is skewed to low complexity over residues 480-494, 505-514, and 755-771; these read SPVP…GSPL, NNFTNNNPGN, and TTVI…HGPS. 3 positions are modified to phosphoserine: Ser838, Ser886, and Ser898. The tract at residues 868-928 is disordered; the sequence is ESPSRDVVGS…PLSLFPTGFP (61 aa). The span at 887–901 shows a compositional bias: low complexity; it reads IETLSNSSGSTSGSI.

It belongs to the BCAS3 family. In terms of assembly, interacts with histone H3, ESR1, KAT2B and PELP1; the interactions occur in a estrogen-dependent manner. Interacts with beta-tubulin and VIM. Interacts (via C-terminal) with PHAF1; the interaction is requrired for the association with the phagophore. As to expression, expressed in stomach, liver, lung, kidney, prostate, testis, thyroid gland, adrenal gland, brain, heart, skeletal muscle, colon, spleen, small intestine, placenta, blood leukocyte and mammary epithelial cells. Expressed in undifferentiated ES cells. Expressed in blood islands and nascent blood vessels derived from differentiated ES cells into embryoid bodies (BD). Expressed in endothelial cells. Not detected in brain. Expressed in brain tumors (at protein level). Expressed in brain. Highly expressed in breast cancers and in glioma cell lines.

The protein resides in the nucleus. It localises to the cytoplasm. Its subcellular location is the cytoskeleton. The protein localises to the preautophagosomal structure. Functionally, plays a role in angiogenesis. Participates in the regulation of cell polarity and directional endothelial cell migration by mediating both the activation and recruitment of CDC42 and the reorganization of the actin cytoskeleton at the cell leading edge. Promotes filipodia formation. Functions synergistically with PELP1 as a transcriptional coactivator of estrogen receptor-responsive genes. Stimulates histone acetyltransferase activity. Binds to chromatin. Plays a regulatory role in autophagic activity. In complex with PHAF1, associates with the preautophagosomal structure during both non-selective and selective autophagy. Probably binds phosphatidylinositol 3-phosphate (PtdIns3P) which would mediate the recruitment preautophagosomal structures. The polypeptide is BCAS3 microtubule associated cell migration factor (Homo sapiens (Human)).